Consider the following 839-residue polypeptide: MSDNDYERFEITDYDLDNEFNINRPRGRQSRHQQIYGIWADDSEEESGGEGGTKRRGRAARKPKDYTMPVNFVAGGIQQAGKKKKKALQADDEKGSQKEGAEADQGEESDDSAASGRPAFGQNDPGSSNSSSEEERPTLSRKQPSTTFQHRSHIASERNVGAWEQHTRGIGAKLLLQMGYEPGKGLGKDLQGISHPVQAHVRKGRGAIGAYGPETAASIGGKTNKSIKVDEDVREAKEFKDQLNKWRKGSAGGAEPMERQGKRYYYKSVEEVIAKGHTSGHLLSEKLSKKLGNVRVIDMTGPEKRVLSGYHALGQAKITPEETLYDTEATEKGSAPACVFAMPELTHNLQLLVSQCEQQIIAIDNQERECSSQQAALESEHRKLEEIVQLERNHIRTLEESLERVERLIDNPDLSLPQAERLFRELLVDYAAEFHEFGLADLAAGVIAPLLKRELVQWQPLENPTEPLPLIKKWRGMLQQGDAAEQQPRNVFDPYSSLIWAGVMPSFRSSAAAWQPKEHPPMASLLDAWAPLLPSWVLDSVLEQLVLPRLVAGVQEWDPLTDTVPIDSWVLPWHAILGSKLEEAVYPQIRSKLGIALRAWSPHDRSARAMLTPWQKAFPEEEMQEFLQRYIVPKLQATLGELIINPMHQDLELWQQVWEWHELIDPMYMAQLLDRHFFPRWMQVLVVWLNQSPDYAEISRWYTGWKSMLSEPLLREPSVKEHLRRALEIMHRASDTLLQPTVTPTPPPPVPPAPVIMMDLIHPPAQLEFKELVSQQCADLGIIFAPLPGRREMGKQIYRVGKLFCYIDRHVCMVSDGSFSNWKPVSLNHLLERSQTGIL.

The interval 22–164 (INRPRGRQSR…ASERNVGAWE (143 aa)) is disordered. Phosphoserine occurs at positions 43 and 47. Phosphothreonine is present on Thr-53. The segment covering 88–101 (LQADDEKGSQKEGA) has biased composition (basic and acidic residues). Over residues 102–111 (EADQGEESDD) the composition is skewed to acidic residues. Polar residues predominate over residues 140–149 (SRKQPSTTFQ). Residues 167 to 213 (TRGIGAKLLLQMGYEPGKGLGKDLQGISHPVQAHVRKGRGAIGAYGP) enclose the G-patch domain. The stretch at 363–411 (IDNQERECSSQQAALESEHRKLEEIVQLERNHIRTLEESLERVERLIDN) forms a coiled coil.

Belongs to the TFP11/STIP family. In terms of assembly, identified in the spliceosome C complex. Interacts with pnut.

It localises to the nucleus. Functionally, may be involved in pre-mRNA splicing. This is Septin-interacting protein 1 (sip1) from Drosophila melanogaster (Fruit fly).